The chain runs to 511 residues: MLDDLPEQFDLVVIGTGFTESCIAAAGSRIGKSVLHLDSNEYYGDVWSSFSMDALCARLDQEVEPHSALRNARYTWHSMEKESETDAQSWNRDSVLAKSRRFSLDLCPRILYAAGELVQLLIKSNICRYAEFRAVDHVCMRHNGEIVSVPCSRSDVFNTKTLTIVEKRLLMKFLTACNDYGEDKCNEDSLEFRGRTFLEYLQAQRVTEKISSCVMQAIAMCGPSTSFEEGMQRTQRFLGSLGRYGNTPFLFPMYGCGELPQCFCRLCAVYGGIYCLKRAVDDIALDSNSNEFLLSSAGKTLRAKNVVSAPGYTPVSKGIELKPHISRGLFISSSPLGNEELNKGGGGVNLLRLLDNEGGREAFLIQLSHYTGACPEGLYIFHLTTPALSEDPASDLAIFTSQLFDQSDAQIIFSSYFTIAAQSSKSPAAEHIYYTDPPTYELDYDAAIANARDIFGKMFPDADFLPRAPDPEEIVVDGEDPSALNEHTLPEDLRAQLHDMQQATQEMDIQE.

Belongs to the Rab GDI family.

The protein resides in the cytoplasm. The protein localises to the perinuclear region. It is found in the cytoskeleton. It localises to the spindle pole. Its function is as follows. Binds unprenylated Rab proteins, presents it to the catalytic component B, and remains bound to it after the geranylgeranyl transfer reaction. The component A is thought to be regenerated by transferring its prenylated Rab to a protein acceptor. This Drosophila melanogaster (Fruit fly) protein is Rab proteins geranylgeranyltransferase component A.